Consider the following 315-residue polypeptide: uncharacterized protein (315 aa).

The next 3 membrane-spanning stretches (helical) occupy residues 19 to 39, 56 to 76, and 81 to 101; these read IGAGAATIASAGAAIGIGNVF, TVLVVTLTLLGGVAAFYLHSF, and PLKKIIYLFLVFFIAVGISLI. Positions 154-171 are enriched in polar residues; it reads EDSASSGRTSSSVNQPIQ. The interval 154–214 is disordered; sequence EDSASSGRTS…EREARAQEHD (61 aa). A compositionally biased stretch (basic and acidic residues) spans 203–214; sequence GGEREARAQEHD.

Belongs to the ATPase C chain family.

The protein localises to the mitochondrion membrane. This is an uncharacterized protein from Arabidopsis thaliana (Mouse-ear cress).